The following is a 144-amino-acid chain: Large ribosomal subunit protein uL13 (144 aa).

Belongs to the universal ribosomal protein uL13 family. Part of the 50S ribosomal subunit.

Functionally, this protein is one of the early assembly proteins of the 50S ribosomal subunit, although it is not seen to bind rRNA by itself. It is important during the early stages of 50S assembly. This chain is Large ribosomal subunit protein uL13, found in Clostridium tetani (strain Massachusetts / E88).